The following is a 231-amino-acid chain: 7-cyano-7-deazaguanine synthase (231 aa).

8–18 (FSGGQDSTTCL) serves as a coordination point for ATP. 4 residues coordinate Zn(2+): Cys188, Cys197, Cys200, and Cys203.

Belongs to the QueC family. Requires Zn(2+) as cofactor.

It carries out the reaction 7-carboxy-7-deazaguanine + NH4(+) + ATP = 7-cyano-7-deazaguanine + ADP + phosphate + H2O + H(+). It participates in purine metabolism; 7-cyano-7-deazaguanine biosynthesis. Catalyzes the ATP-dependent conversion of 7-carboxy-7-deazaguanine (CDG) to 7-cyano-7-deazaguanine (preQ(0)). This Citrobacter koseri (strain ATCC BAA-895 / CDC 4225-83 / SGSC4696) protein is 7-cyano-7-deazaguanine synthase.